The chain runs to 357 residues: Mitochondrial carrier protein LEU5 (357 aa).

6 consecutive transmembrane segments (helical) span residues 31–47, 103–119, 136–153, 208–228, 269–285, and 325–347; these read DYIV…GSCA, LRIF…YEQI, LVSG…TYPL, VPTV…HDLL, ISGG…AYPF, and GFFV…SFFV. Solcar repeat units follow at residues 31–122, 130–231, and 262–354; these read DYIV…IRNT, ESHW…LHDV, and LRTW…MKWN.

Belongs to the mitochondrial carrier (TC 2.A.29) family.

Its subcellular location is the mitochondrion inner membrane. Its function is as follows. Required for the accumulation of coenzyme A in the mitochondrial matrix. This is Mitochondrial carrier protein LEU5 (LEU5) from Saccharomyces cerevisiae (strain ATCC 204508 / S288c) (Baker's yeast).